We begin with the raw amino-acid sequence, 334 residues long: UDP-N-acetylglucosamine--N-acetylmuramyl-(pentapeptide) pyrophosphoryl-undecaprenol N-acetylglucosamine transferase (334 aa).

UDP-N-acetyl-alpha-D-glucosamine is bound by residues 11–13, Asn-125, Ser-185, Ile-229, and Gln-274; that span reads TGG.

Belongs to the glycosyltransferase 28 family. MurG subfamily.

Its subcellular location is the cell inner membrane. The catalysed reaction is di-trans,octa-cis-undecaprenyl diphospho-N-acetyl-alpha-D-muramoyl-L-alanyl-D-glutamyl-meso-2,6-diaminopimeloyl-D-alanyl-D-alanine + UDP-N-acetyl-alpha-D-glucosamine = di-trans,octa-cis-undecaprenyl diphospho-[N-acetyl-alpha-D-glucosaminyl-(1-&gt;4)]-N-acetyl-alpha-D-muramoyl-L-alanyl-D-glutamyl-meso-2,6-diaminopimeloyl-D-alanyl-D-alanine + UDP + H(+). Its pathway is cell wall biogenesis; peptidoglycan biosynthesis. Cell wall formation. Catalyzes the transfer of a GlcNAc subunit on undecaprenyl-pyrophosphoryl-MurNAc-pentapeptide (lipid intermediate I) to form undecaprenyl-pyrophosphoryl-MurNAc-(pentapeptide)GlcNAc (lipid intermediate II). The sequence is that of UDP-N-acetylglucosamine--N-acetylmuramyl-(pentapeptide) pyrophosphoryl-undecaprenol N-acetylglucosamine transferase from Thermosipho melanesiensis (strain DSM 12029 / CIP 104789 / BI429).